The following is a 99-amino-acid chain: Aspartyl/glutamyl-tRNA(Asn/Gln) amidotransferase subunit C (99 aa).

It belongs to the GatC family. Heterotrimer of A, B and C subunits.

It catalyses the reaction L-glutamyl-tRNA(Gln) + L-glutamine + ATP + H2O = L-glutaminyl-tRNA(Gln) + L-glutamate + ADP + phosphate + H(+). The catalysed reaction is L-aspartyl-tRNA(Asn) + L-glutamine + ATP + H2O = L-asparaginyl-tRNA(Asn) + L-glutamate + ADP + phosphate + 2 H(+). In terms of biological role, allows the formation of correctly charged Asn-tRNA(Asn) or Gln-tRNA(Gln) through the transamidation of misacylated Asp-tRNA(Asn) or Glu-tRNA(Gln) in organisms which lack either or both of asparaginyl-tRNA or glutaminyl-tRNA synthetases. The reaction takes place in the presence of glutamine and ATP through an activated phospho-Asp-tRNA(Asn) or phospho-Glu-tRNA(Gln). This Burkholderia lata (strain ATCC 17760 / DSM 23089 / LMG 22485 / NCIMB 9086 / R18194 / 383) protein is Aspartyl/glutamyl-tRNA(Asn/Gln) amidotransferase subunit C.